Here is a 440-residue protein sequence, read N- to C-terminus: Proline--tRNA ligase (440 aa).

It belongs to the class-II aminoacyl-tRNA synthetase family. ProS type 2 subfamily. Homodimer.

It is found in the cytoplasm. The enzyme catalyses tRNA(Pro) + L-proline + ATP = L-prolyl-tRNA(Pro) + AMP + diphosphate. In terms of biological role, catalyzes the attachment of proline to tRNA(Pro) in a two-step reaction: proline is first activated by ATP to form Pro-AMP and then transferred to the acceptor end of tRNA(Pro). This is Proline--tRNA ligase from Azorhizobium caulinodans (strain ATCC 43989 / DSM 5975 / JCM 20966 / LMG 6465 / NBRC 14845 / NCIMB 13405 / ORS 571).